A 254-amino-acid polypeptide reads, in one-letter code: Ditrans,polycis-undecaprenyl-diphosphate synthase ((2E,6E)-farnesyl-diphosphate specific) (254 aa).

Aspartate 25 is an active-site residue. Aspartate 25 lines the Mg(2+) pocket. Substrate-binding positions include 26 to 29, tryptophan 30, arginine 38, histidine 42, and 70 to 72; these read GNGR and SSE. Asparagine 73 (proton acceptor) is an active-site residue. The substrate site is built by tryptophan 74, arginine 76, and arginine 193. Histidine 198 serves as a coordination point for Mg(2+). 199–201 serves as a coordination point for substrate; the sequence is RIS. Mg(2+) is bound at residue glutamate 212.

The protein belongs to the UPP synthase family. As to quaternary structure, homodimer. Requires Mg(2+) as cofactor.

The catalysed reaction is 8 isopentenyl diphosphate + (2E,6E)-farnesyl diphosphate = di-trans,octa-cis-undecaprenyl diphosphate + 8 diphosphate. Functionally, catalyzes the sequential condensation of isopentenyl diphosphate (IPP) with (2E,6E)-farnesyl diphosphate (E,E-FPP) to yield (2Z,6Z,10Z,14Z,18Z,22Z,26Z,30Z,34E,38E)-undecaprenyl diphosphate (di-trans,octa-cis-UPP). UPP is the precursor of glycosyl carrier lipid in the biosynthesis of bacterial cell wall polysaccharide components such as peptidoglycan and lipopolysaccharide. This chain is Ditrans,polycis-undecaprenyl-diphosphate synthase ((2E,6E)-farnesyl-diphosphate specific), found in Photorhabdus laumondii subsp. laumondii (strain DSM 15139 / CIP 105565 / TT01) (Photorhabdus luminescens subsp. laumondii).